The sequence spans 168 residues: Thiol peroxidase (168 aa).

In terms of domain architecture, Thioredoxin spans 20 to 168; sequence PAVGSQLPAF…DYDKALAALA (149 aa). Cys62 (cysteine sulfenic acid (-SOH) intermediate) is an active-site residue. Cys62 and Cys96 are oxidised to a cystine.

Belongs to the peroxiredoxin family. Tpx subfamily. In terms of assembly, homodimer.

The catalysed reaction is a hydroperoxide + [thioredoxin]-dithiol = an alcohol + [thioredoxin]-disulfide + H2O. Its function is as follows. Thiol-specific peroxidase that catalyzes the reduction of hydrogen peroxide and organic hydroperoxides to water and alcohols, respectively. Plays a role in cell protection against oxidative stress by detoxifying peroxides. This Chlorobaculum tepidum (strain ATCC 49652 / DSM 12025 / NBRC 103806 / TLS) (Chlorobium tepidum) protein is Thiol peroxidase.